The primary structure comprises 197 residues: Ycf20-like protein (197 aa).

A run of 3 helical transmembrane segments spans residues 113-133, 138-158, and 173-193; these read MKIF…TILG, WDVL…MLMY, and FVVF…VDAF.

Belongs to the ycf20 family.

The protein localises to the membrane. In Arabidopsis thaliana (Mouse-ear cress), this protein is Ycf20-like protein.